The primary structure comprises 416 residues: PTS system N-acetylglucosamine-specific EIIC component (416 aa).

In terms of domain architecture, PTS EIIC type-1 spans 16–406; the sequence is SGLFQGLQKV…FNLKTPGREP (391 aa). The next 10 helical transmembrane spans lie at 68-88, 96-116, 130-150, 170-190, 196-216, 266-286, 298-318, 323-343, 344-364, and 375-395; these read AGGA…AIGF, TALA…AFPV, TYND…AVLW, LVPI…GLVW, GISN…ALFG, IFQA…ALAM, VLGM…TEPI, MFIA…SMAI, TWGL…DYAL, and IIPI…FAIV.

Its subcellular location is the cell membrane. Its function is as follows. The phosphoenolpyruvate-dependent sugar phosphotransferase system (sugar PTS), a major carbohydrate active transport system, catalyzes the phosphorylation of incoming sugar substrates concomitantly with their translocation across the cell membrane. This system is involved in N-acetylglucosamine (GlcNAc) transport. High-affinity permease, which exhibits a narrow specificity for GlcNAc. Essential for C-signaling between vegetative growth and development. The sequence is that of PTS system N-acetylglucosamine-specific EIIC component from Streptomyces coelicolor (strain ATCC BAA-471 / A3(2) / M145).